Here is a 1274-residue protein sequence, read N- to C-terminus: Myosin-1 (1274 aa).

Residues 1-28 (MAPSKKAGKKGAVGGFLSGASKPQKVQK) are disordered. In terms of domain architecture, Myosin motor spans 41 to 721 (AGVPDMTLLS…TLFYLEGERD (681 aa)). 134 to 141 (GESGAGKT) serves as a coordination point for ATP. Position 363 is a phosphoserine (S363). Positions 410–492 (VIGVLDIYGF…AGIFATLNDA (83 aa)) are actin-binding. 2 IQ domains span residues 725–745 (HTMASRIQRAWRAYVRRKHEA) and 746–771 (ATKIQRFWRNQREALVYERKRDYGHQ). The region spanning 779–969 (RRRFSLLGMR…TIQVGSGEPP (191 aa)) is the TH1 domain. Disordered stretches follow at residues 951 to 1029 (RGDA…PVVT), 1042 to 1071 (ARAPPSIPGRAAAPPPPPPPPPPAGPPKEF), and 1116 to 1248 (PSNY…QVAQ). Residues 957–974 (KSHTIQVGSGEPPNSLSN) show a composition bias toward polar residues. The span at 1042–1053 (ARAPPSIPGRAA) shows a compositional bias: low complexity. Composition is skewed to pro residues over residues 1054–1067 (APPPPPPPPPPAGP) and 1126–1138 (APPPPPPPPPPSR). An SH3 domain is found at 1067–1125 (PPKEFYKALYNFTGQEGEMNLVKGEEVEVKEKDDNGWWMVVKNGQEGWAPSNYLKKVEQ). 2 stretches are compositionally biased toward low complexity: residues 1139-1157 (PVAARPPAASSAPTAPAVT) and 1170-1226 (AASA…IGGK).

It belongs to the TRAFAC class myosin-kinesin ATPase superfamily. Myosin family. Phosphorylation of the TEDS site (Ser-363) is required for the polarization of the actin cytoskeleton. Phosphorylation probably activates the myosin-I ATPase activity.

It localises to the cytoplasm. The protein localises to the cytoskeleton. It is found in the actin patch. In terms of biological role, type-I myosin implicated in the organization of the actin cytoskeleton. Required for proper actin cytoskeleton polarization. At the cell cortex, assembles in patch-like structures together with proteins from the actin-polymerizing machinery and promotes actin assembly. Functions as actin nucleation-promoting factor (NPF) for the Arp2/3 complex. The polypeptide is Myosin-1 (MYO1) (Cryptococcus neoformans var. neoformans serotype D (strain B-3501A) (Filobasidiella neoformans)).